The primary structure comprises 115 residues: Cytochrome c (115 aa).

Residues Cys26, Cys29, His30, and Met91 each contribute to the heme c site.

Belongs to the cytochrome c family. Binds 1 heme c group covalently per subunit.

It is found in the mitochondrion intermembrane space. Functionally, electron carrier protein. The oxidized form of the cytochrome c heme group can accept an electron from the heme group of the cytochrome c1 subunit of cytochrome reductase. Cytochrome c then transfers this electron to the cytochrome oxidase complex, the final protein carrier in the mitochondrial electron-transport chain. The polypeptide is Cytochrome c (Theileria parva (East coast fever infection agent)).